The sequence spans 235 residues: Photosystem I assembly protein Ycf4 (235 aa).

2 helical membrane passes run 21–43 and 63–85; these read NLCWACILFLGSLGFLLVGTSSY and GIVMSFYGIAGLFISSYLWCTIL.

This sequence belongs to the Ycf4 family.

It is found in the plastid. The protein localises to the chloroplast thylakoid membrane. Its function is as follows. Seems to be required for the assembly of the photosystem I complex. The polypeptide is Photosystem I assembly protein Ycf4 (Amborella trichopoda).